Reading from the N-terminus, the 332-residue chain is Anthranilate phosphoribosyltransferase (332 aa).

Residues glycine 79, 82 to 83 (GD), threonine 87, 89 to 92 (NIST), 107 to 115 (KHGNYGATS), and alanine 119 contribute to the 5-phospho-alpha-D-ribose 1-diphosphate site. Position 79 (glycine 79) interacts with anthranilate. Position 91 (serine 91) interacts with Mg(2+). Asparagine 110 provides a ligand contact to anthranilate. Arginine 165 provides a ligand contact to anthranilate. The Mg(2+) site is built by aspartate 223 and glutamate 224.

The protein belongs to the anthranilate phosphoribosyltransferase family. In terms of assembly, homodimer. Mg(2+) serves as cofactor.

It catalyses the reaction N-(5-phospho-beta-D-ribosyl)anthranilate + diphosphate = 5-phospho-alpha-D-ribose 1-diphosphate + anthranilate. Its pathway is amino-acid biosynthesis; L-tryptophan biosynthesis; L-tryptophan from chorismate: step 2/5. Catalyzes the transfer of the phosphoribosyl group of 5-phosphorylribose-1-pyrophosphate (PRPP) to anthranilate to yield N-(5'-phosphoribosyl)-anthranilate (PRA). This Bacteroides thetaiotaomicron (strain ATCC 29148 / DSM 2079 / JCM 5827 / CCUG 10774 / NCTC 10582 / VPI-5482 / E50) protein is Anthranilate phosphoribosyltransferase.